We begin with the raw amino-acid sequence, 440 residues long: Putative sodium-coupled neutral amino acid transporter 8 (440 aa).

A run of 11 helical transmembrane segments spans residues 29–49 (AIFI…PWAF), 58–78 (AIMV…ILGY), 100–120 (IGKL…VAFL), 156–176 (FAIT…KEIS), 183–203 (ILGT…YYVM), 223–243 (MFSV…CVTI), 255–275 (WAAV…FTGI), 300–320 (VIIA…IILL), 350–370 (VVIT…VPDI), 373–393 (VISV…GLCL), and 418–438 (VVCG…EIIA).

This sequence belongs to the amino acid/polyamine transporter 2 family.

The protein resides in the membrane. Functionally, putative sodium-dependent amino acid/proton antiporter. The chain is Putative sodium-coupled neutral amino acid transporter 8 (slc38a8) from Xenopus tropicalis (Western clawed frog).